Reading from the N-terminus, the 413-residue chain is Arginine biosynthesis bifunctional protein ArgJ (413 aa).

Thr158, Lys184, Thr195, Glu285, Asn408, and Ser413 together coordinate substrate. Thr195 (nucleophile) is an active-site residue.

It belongs to the ArgJ family. In terms of assembly, heterotetramer of two alpha and two beta chains.

The protein resides in the cytoplasm. It carries out the reaction N(2)-acetyl-L-ornithine + L-glutamate = N-acetyl-L-glutamate + L-ornithine. It catalyses the reaction L-glutamate + acetyl-CoA = N-acetyl-L-glutamate + CoA + H(+). Its pathway is amino-acid biosynthesis; L-arginine biosynthesis; L-ornithine and N-acetyl-L-glutamate from L-glutamate and N(2)-acetyl-L-ornithine (cyclic): step 1/1. The protein operates within amino-acid biosynthesis; L-arginine biosynthesis; N(2)-acetyl-L-ornithine from L-glutamate: step 1/4. Catalyzes two activities which are involved in the cyclic version of arginine biosynthesis: the synthesis of N-acetylglutamate from glutamate and acetyl-CoA as the acetyl donor, and of ornithine by transacetylation between N(2)-acetylornithine and glutamate. The sequence is that of Arginine biosynthesis bifunctional protein ArgJ from Rhizobium meliloti (strain 1021) (Ensifer meliloti).